A 426-amino-acid polypeptide reads, in one-letter code: Putative competence-damage inducible protein (426 aa).

The protein belongs to the CinA family.

The protein is Putative competence-damage inducible protein of Symbiobacterium thermophilum (strain DSM 24528 / JCM 14929 / IAM 14863 / T).